The sequence spans 387 residues: Exodeoxyribonuclease 7 large subunit (387 aa).

This sequence belongs to the XseA family. In terms of assembly, heterooligomer composed of large and small subunits.

Its subcellular location is the cytoplasm. It carries out the reaction Exonucleolytic cleavage in either 5'- to 3'- or 3'- to 5'-direction to yield nucleoside 5'-phosphates.. Its function is as follows. Bidirectionally degrades single-stranded DNA into large acid-insoluble oligonucleotides, which are then degraded further into small acid-soluble oligonucleotides. In Campylobacter fetus subsp. fetus (strain 82-40), this protein is Exodeoxyribonuclease 7 large subunit.